Here is a 398-residue protein sequence, read N- to C-terminus: Succinate--CoA ligase [ADP-forming] subunit beta (398 aa).

In terms of domain architecture, ATP-grasp spans Lys-9–Glu-254. ATP contacts are provided by residues Lys-46, Gly-53–Gly-55, Glu-109, Ser-112, and Glu-117. Mg(2+) contacts are provided by Asn-209 and Asp-223. Residues Asn-274 and Gly-331–Met-333 each bind substrate.

The protein belongs to the succinate/malate CoA ligase beta subunit family. Heterotetramer of two alpha and two beta subunits. Requires Mg(2+) as cofactor.

The catalysed reaction is succinate + ATP + CoA = succinyl-CoA + ADP + phosphate. It catalyses the reaction GTP + succinate + CoA = succinyl-CoA + GDP + phosphate. It participates in carbohydrate metabolism; tricarboxylic acid cycle; succinate from succinyl-CoA (ligase route): step 1/1. Functionally, succinyl-CoA synthetase functions in the citric acid cycle (TCA), coupling the hydrolysis of succinyl-CoA to the synthesis of either ATP or GTP and thus represents the only step of substrate-level phosphorylation in the TCA. The beta subunit provides nucleotide specificity of the enzyme and binds the substrate succinate, while the binding sites for coenzyme A and phosphate are found in the alpha subunit. This Bradyrhizobium diazoefficiens (strain JCM 10833 / BCRC 13528 / IAM 13628 / NBRC 14792 / USDA 110) protein is Succinate--CoA ligase [ADP-forming] subunit beta.